Reading from the N-terminus, the 92-residue chain is Small ribosomal subunit protein bS18 (92 aa).

Residues 1–22 (MADERAPQRSTSGPRKKRPFQR) are disordered.

Belongs to the bacterial ribosomal protein bS18 family. As to quaternary structure, part of the 30S ribosomal subunit. Forms a tight heterodimer with protein bS6.

Binds as a heterodimer with protein bS6 to the central domain of the 16S rRNA, where it helps stabilize the platform of the 30S subunit. The chain is Small ribosomal subunit protein bS18 from Citrifermentans bemidjiense (strain ATCC BAA-1014 / DSM 16622 / JCM 12645 / Bem) (Geobacter bemidjiensis).